Here is a 1367-residue protein sequence, read N- to C-terminus: Collagen alpha-1(XV) chain (1367 aa).

The N-terminal stretch at 1-31 (MTHRRTAQGRRPRWLLSIISALLSAVLQTRA) is a signal peptide. In terms of domain architecture, Laminin G-like spans 54–249 (SVSFTTGYGG…SSASGEASGF (196 aa)). The interval 229–604 (RTPEELCEAQ…DIVGNEDLLR (376 aa)) is nonhelical region 1 (NC1). Residues S243 and S247 are each glycosylated (O-linked (Xyl...) (chondroitin sulfate) serine). The tract at residues 267–319 (APPKESHVDPISVPPTSSSPAEDSELSGEPVPEGTPETNLSIIGHSSPEQGSG) is disordered. N305 and N323 each carry an N-linked (GlcNAc...) asparagine glycan. A glycan (O-linked (Xyl...) (chondroitin sulfate) serine) is linked at S341. N-linked (GlcNAc...) asparagine glycans are attached at residues N348, N375, and N402. Disordered regions lie at residues 396–446 (DTPD…SHGE) and 529–784 (TAEP…GHVE). A compositionally biased stretch (polar residues) spans 402 to 429 (NLTTTASGDGEVPTSTDGDTEADSSPTG). Basic and acidic residues predominate over residues 434–446 (KPREEATLGSHGE). Positions 555-564 (PSGPPLPTPT) are enriched in pro residues. A compositionally biased stretch (gly residues) spans 582–595 (GPVGGLDEGSGSGD). 2 consecutive Collagen-like domains span residues 605 to 665 (GPPG…GMKG) and 666 to 717 (EKGA…PPGP). The segment at 605 to 718 (GPPGPPGPPG…PGPPGPPGPG (114 aa)) is triple-helical region 1 (COL1). Residues 606–616 (PPGPPGPPGSP) are compositionally biased toward pro residues. Residue N673 is glycosylated (N-linked (GlcNAc...) asparagine). Residues 703–717 (MGPPGPPGPPGPPGP) are compositionally biased toward pro residues. The tract at residues 719-748 (CTTELGFEIEGSGDVRLLSKPTISGPTSPS) is nonhelical region 2 (NC2). An O-linked (Xyl...) (chondroitin sulfate) serine glycan is attached at S730. Residues 737–750 (SKPTISGPTSPSGP) are compositionally biased toward low complexity. The interval 749-783 (GPKGEKGEQGAKGERGADGTSTMGPPGPRGPPGHV) is triple-helical region 2 (COL2). Positions 751–765 (KGEKGEQGAKGERGA) are enriched in basic and acidic residues. Positions 784 to 807 (EVLSSSLINITNGSMNFSDIPELM) are nonhelical region 3 (NC3). Residues N792, N795, and N799 are each glycosylated (N-linked (GlcNAc...) asparagine). 2 consecutive Collagen-like domains span residues 808–850 (GPPG…GEPG) and 863–912 (KGRK…GDRG). Residues 808 to 852 (GPPGPDGVPGLPGFPGPRGPKGDTGVPGFPGLKGEQGEKGEPGAI) are triple-helical region 3 (COL3). Positions 853-863 (LTGDVPLEMMK) are nonhelical region 4 (NC4). The tract at residues 864–934 (GRKGEPGIHG…PGPPGPPGAV (71 aa)) is triple-helical region 4 (COL4). A disordered region spans residues 905-930 (KGAKGDRGVTLPGPPGLPGPPGPPGP). Over residues 916–930 (PGPPGLPGPPGPPGP) the composition is skewed to pro residues. Residues 935-968 (VNIKGAVFPIPARPHCKTPVGTAHPGDPELVTFH) form a nonhelical region 5 (NC5) region. The segment at 969 to 998 (GVKGEKGSWGLPGSKGEKGDQGAQGPPGPP) is triple-helical region 5 (COL5). Disordered stretches follow at residues 974 to 1000 (KGSWGLPGSKGEKGDQGAQGPPGPPVD) and 1055 to 1089 (GPPGIPGLPGPPGFGRPGVPGPPGPPGPPGPPAIL). Residues 999-1031 (VDPAYLRHFLNSLKGENEDASFRGESSNNLFVS) are nonhelical region 6 (NC6). The segment at 1032–1086 (GPPGLPGYPGLVGQKGEAVVGPQGPPGIPGLPGPPGFGRPGVPGPPGPPGPPGPP) is triple-helical region 6 (COL6). A compositionally biased stretch (pro residues) spans 1055 to 1086 (GPPGIPGLPGPPGFGRPGVPGPPGPPGPPGPP). The interval 1087-1096 (AILGAAVALP) is nonhelical region 7 (NC7). The triple-helical region 7 (COL7) stretch occupies residues 1097-1111 (GPPGPPGQPGLPGSR). Positions 1112–1367 (NLVTALSDMG…ENSFMTDTRK (256 aa)) are nonhelical region 8 (NC8). 2 disulfide bridges follow: C1216–C1356 and C1318–C1348.

It belongs to the multiplexin collagen family. Trimer; disulfide-linked. As to quaternary structure, interacts moderately with EFEMP2. In terms of processing, prolines at the third position of the tripeptide repeating unit (G-X-Y) are hydroxylated in some or all of the chains. O-glycosylated; contains chondroitin sulfate. As to expression, detected in testis, brain, heart, kidney, skeletal muscle and skin (at protein level). Detected in heart and skeletal muscle.

The protein localises to the secreted. The protein resides in the extracellular space. It localises to the extracellular matrix. Structural protein that stabilizes microvessels and muscle cells, both in heart and in skeletal muscle. Functionally, restin potently inhibits angiogenesis. The polypeptide is Collagen alpha-1(XV) chain (Col15a1) (Mus musculus (Mouse)).